The sequence spans 137 residues: ATP synthase epsilon chain (137 aa).

It belongs to the ATPase epsilon chain family. As to quaternary structure, F-type ATPases have 2 components, CF(1) - the catalytic core - and CF(0) - the membrane proton channel. CF(1) has five subunits: alpha(3), beta(3), gamma(1), delta(1), epsilon(1). CF(0) has three main subunits: a, b and c.

Its subcellular location is the cell membrane. In terms of biological role, produces ATP from ADP in the presence of a proton gradient across the membrane. This Desulforudis audaxviator (strain MP104C) protein is ATP synthase epsilon chain.